A 66-amino-acid polypeptide reads, in one-letter code: MAKSKDARIRVLLECTSCVRGGVNKESTGISRYITEKNRHNTPGRLELQKFCPYCYKHTIHGEIKK.

This sequence belongs to the bacterial ribosomal protein bL33 family.

Its subcellular location is the plastid. The protein localises to the chloroplast. The chain is Large ribosomal subunit protein bL33c from Vitis vinifera (Grape).